Here is a 507-residue protein sequence, read N- to C-terminus: Phosphoprotein (507 aa).

The interval 1–48 (MAEEQARHVKNGLECIRALKAEPIGSLAIGEAMAAWSEISDNPGQERA) is interaction with N0. Disordered regions lie at residues 42–91 (NPGQ…DDTE), 133–163 (SGLD…TEGY), 201–227 (NNFP…SETP), 252–273 (TQCA…GNVP), and 285–307 (WTPE…GDHY). Ser-86 and Ser-151 each carry phosphoserine. Residues 144–160 (GDNESENSDVDIGEPDT) show a composition bias toward acidic residues. The span at 260–270 (SEPSGPGAPAG) shows a compositional bias: low complexity. The segment covering 286-301 (TPESGTTISPRSQNNK) has biased composition (polar residues). Residues 304–376 (GDHYDDELFS…LSSIMIAIPG (73 aa)) are multimerization. Interaction with the L polymerase regions lie at residues 361 to 377 (STLE…IPGL) and 396 to 410 (PIIG…AEVL). Residues 457–507 (GPVSRSVIRSIIKSSRIEEDRKRYLMTLLDDIKGANDLSKFHQMLMKIIMK) are x domain (XD). The tract at residues 459–507 (VSRSVIRSIIKSSRIEEDRKRYLMTLLDDIKGANDLSKFHQMLMKIIMK) is interaction with the nucleocapsid (N-RNA).

Belongs to the morbillivirus P protein family. As to quaternary structure, homotetramer. Interacts (via multimerization domain and XD domain) with polymerase L; this interaction forms the polymerase L-P complex. Interacts (via N-terminus) with N0 (via Ncore); this interaction allows P to chaperon N0 to avoid N polymerization and non-specific RNA binding before encapsidation. Interacts (via C-terminus) with N-RNA template (via Ntail); this interaction maintains the P/L complex anchored to the nucleocapsid template during the sequential transcription. Interacts (via C-terminus) with protein C this interaction allows C to associate with the ribonucleocapsid. Phosphorylation on serines by host CK2 is necessary for the formation of viral factories.

Functionally, essential cofactor of the RNA polymerase L that plays a central role in the transcription and replication by forming the polymerase complex with RNA polymerase L and recruiting L to the genomic N-RNA template for RNA synthesis. Also plays a central role in the encapsidation of nascent RNA chains by forming the encapsidation complex with the nucleocapsid protein N (N-P complex). Acts as a chaperone for newly synthesized free N protein, so-called N0, allowing encapsidation of nascent RNA chains during replication. The nucleoprotein protein N prevents excessive phosphorylation of P, which leads to down-regulation of viral transcription/ replication. Participates, together with N, in the formation of viral factories (viroplasms), which are large inclusions in the host cytoplasm where replication takes place. The polypeptide is Phosphoprotein (P/V) (Homo sapiens (Human)).